Consider the following 218-residue polypeptide: Pyridoxine/pyridoxamine 5'-phosphate oxidase (218 aa).

Substrate is bound by residues 12 to 15 and Arg-70; that span reads RMSY. FMN is bound by residues 65-70, 80-81, Lys-87, and Gln-109; these read RTVLLR and YT. Tyr-127, Arg-131, and Ser-135 together coordinate substrate. FMN-binding positions include 145 to 146 and Trp-191; that span reads QS. 197 to 199 is a substrate binding site; the sequence is RLH. Arg-201 provides a ligand contact to FMN.

This sequence belongs to the pyridoxamine 5'-phosphate oxidase family. As to quaternary structure, homodimer. Requires FMN as cofactor.

It carries out the reaction pyridoxamine 5'-phosphate + O2 + H2O = pyridoxal 5'-phosphate + H2O2 + NH4(+). The enzyme catalyses pyridoxine 5'-phosphate + O2 = pyridoxal 5'-phosphate + H2O2. It participates in cofactor metabolism; pyridoxal 5'-phosphate salvage; pyridoxal 5'-phosphate from pyridoxamine 5'-phosphate: step 1/1. The protein operates within cofactor metabolism; pyridoxal 5'-phosphate salvage; pyridoxal 5'-phosphate from pyridoxine 5'-phosphate: step 1/1. Its function is as follows. Catalyzes the oxidation of either pyridoxine 5'-phosphate (PNP) or pyridoxamine 5'-phosphate (PMP) into pyridoxal 5'-phosphate (PLP). The protein is Pyridoxine/pyridoxamine 5'-phosphate oxidase of Acinetobacter baylyi (strain ATCC 33305 / BD413 / ADP1).